Here is a 159-residue protein sequence, read N- to C-terminus: Single-stranded DNA-binding protein 2 (159 aa).

Residues 2–104 (MNRVVLVGRL…VVAESVQFLE (103 aa)) enclose the SSB domain. The segment at 106 to 159 (RNHAEGATSNNYQNEANYSNNNKTSSYRADTSQKSDSFANEGKPIDINPDDLPF) is disordered. The segment covering 114-127 (SNNYQNEANYSNNN) has biased composition (low complexity). Positions 128 to 143 (KTSSYRADTSQKSDSF) are enriched in polar residues.

As to quaternary structure, homotetramer.

The protein is Single-stranded DNA-binding protein 2 (ssb2) of Listeria innocua serovar 6a (strain ATCC BAA-680 / CLIP 11262).